The chain runs to 547 residues: Rho GTPase-activating protein 36 (547 aa).

Positions 1 to 40 (MGGCNPFLKAARTLCPRIMPPLLFLSAFIFLVNVLGGAPG) are cleaved as a signal peptide. Residues 226-426 (MSLNPIAKQI…AMIDNWDILF (201 aa)) enclose the Rho-GAP domain. Positions 493–547 (FDEGSSEEPAVPPGTAHSHDDEEGAGNPPIPEQDRPLLRVPREKQAKTGIGYFFP) are disordered. Basic and acidic residues predominate over residues 524–538 (EQDRPLLRVPREKQA).

Functionally, GTPase activator for the Rho-type GTPases by converting them to an inactive GDP-bound state. The polypeptide is Rho GTPase-activating protein 36 (ARHGAP36) (Ailuropoda melanoleuca (Giant panda)).